The sequence spans 940 residues: MQQLQLHDVWEKLRPRDESIELGHYKKALQDVEKVLKKNPTIQCGRALKAWAFLRLGRDEESAALIKALEQETPTESTTLHVMTLCYKETDQLDKICQIFTSASKQLPGNEELLSQLFIAHMRVNDFKAQQTVAMQLYKLKPRNPFYFWAVTSVMLQALRGPDAKDQQKSSLLLSLAQRMVDKLIADNKIEASQEVQLYLQILQHQEKYQEMLTFLDGPVCTNLYPGAPHSIKIDLLKKLNKWADLNKLMKQLLTEDPDRWDYYQDYILSTIEMIKCKDETPETDHTVDMCHEFIAGIIESQPRKNRGPYLARLELARLMVKHKFDKEQQFGELTELLLDYFRMFGDKTCCANDLKLFLEYVEPAKRPGFAAQLMQECRINPVTLPSSKEHMQRHICSLQIARFCGAHAALSEEHLSALYTALSLHYEHGYNTFGQGLLPTDMGPSDPYALLAVNIMYDRAWKLQRSEPLVEALCLLNHLLSNSINNFHGKLLNLQLYHRLGLVEAAHRAYESLDIKHIQLDSLGYLHCSHLCNGGFPALAKQIFDQTLHFFINDTNSVEFLKTSYNFGSFSKLIEFLDFRDRLSNSLHFTLISVEALLLEMVCFSGTLAQNLAAYRLMRIKPQEDRIKWDEMSDNRDLTIFVHWDPTVEQLREECQKDSFSQEHELLQLRSGLLRLVSSFIELFTKGGDDEYQTAQDLSRHWEELFVTVRAKNRQPACERFLVNLLPSRLHSVLAMPYEAVFRDLASFLLALWKGEKHDQIRSGAERCVKHVNDLFELIAGSIKTYNSSGDLLWNRKKVHDTVNACVEIAALVLFVMTVCFDKYSQAPAPQPTRKTKKKDSEQNNHEPAVVLMTEKNRLQLVVDVLRALKTNLVDCEAVLSSWELPLLSDSLAGALEQMSLGAKSESAVRLKLMDTHLGEIKELKKLLKDKLKLINKSI.

One copy of the TPR repeat lies at 77-110 (STTLHVMTLCYKETDQLDKICQIFTSASKQLPGN).

This sequence belongs to the MDM20/NAA25 family. As to quaternary structure, component of the N-terminal acetyltransferase B (NatB) complex.

It localises to the lysosome. Non-catalytic subunit of the NatB complex which catalyzes acetylation of the N-terminal methionine residues of proteins beginning with Met-Asp or Met-Glu. Has 2 roles in the larval immune response: required both for the phagocytic degradation of internalized bacteria and for the induction of Defensin in the fat body. Within the phagocytic blood cells, has a role in detection of infection and activation of the humoral immune response. The chain is Phagocyte signaling-impaired protein from Aedes aegypti (Yellowfever mosquito).